The primary structure comprises 468 residues: Interstitial collagenase (468 aa).

The N-terminal stretch at 1–18 (MPGLPLLLLLLWGVGSHG) is a signal peptide. A propeptide spans 19–98 (FPAASETQEQ…PRCGVPDVAQ (80 aa)) (activation peptide). The Cysteine switch motif lies at 89–96 (PRCGVPDV). Cysteine 91 contacts Zn(2+). Asparagine 119 is a glycosylation site (N-linked (GlcNAc...) asparagine). Residues aspartate 123 and aspartate 157 each contribute to the Ca(2+) site. Residues histidine 167 and aspartate 169 each contribute to the Zn(2+) site. Ca(2+) contacts are provided by aspartate 174, glycine 175, glutamate 177, and glutamine 179. Position 182 (histidine 182) interacts with Zn(2+). Ca(2+)-binding residues include glycine 189, glycine 191, and aspartate 193. Zn(2+) is bound at residue histidine 195. Residues aspartate 197, glutamate 198, and aspartate 200 each coordinate Ca(2+). Histidine 217 is a binding site for Zn(2+). Glutamate 218 is an active-site residue. Zn(2+)-binding residues include histidine 221 and histidine 227. At threonine 273 the chain carries Phosphothreonine. 4 Hemopexin repeats span residues 274–323 (PKVC…WPHL), 324–370 (PNGL…FGFP), 373–421 (VNHI…FPGI), and 422–465 (GNKV…WFNC). Cysteine 277 and cysteine 465 are joined by a disulfide. Ca(2+) contacts are provided by aspartate 284 and glutamine 328. Tyrosine 359 is modified (phosphotyrosine; by PKDCC). Residues aspartate 377 and aspartate 426 each coordinate Ca(2+).

Belongs to the peptidase M10A family. Ca(2+) is required as a cofactor. Requires Zn(2+) as cofactor. Tyrosine phosphorylated in platelets by PKDCC/VLK.

It is found in the secreted. The protein resides in the extracellular space. It localises to the extracellular matrix. It catalyses the reaction Cleavage of the triple helix of collagen at about three-quarters of the length of the molecule from the N-terminus, at 775-Gly-|-Ile-776 in the alpha1(I) chain. Cleaves synthetic substrates and alpha-macroglobulins at bonds where P1' is a hydrophobic residue.. Its activity is regulated as follows. Can be activated without removal of the activation peptide. Cleaves collagens of types I, II, and III at one site in the helical domain. Also cleaves collagens of types VII and X. In Oryctolagus cuniculus (Rabbit), this protein is Interstitial collagenase (MMP1).